We begin with the raw amino-acid sequence, 288 residues long: Homoserine kinase (288 aa).

78-88 (PLARGLGSSSS) is an ATP binding site.

The protein belongs to the GHMP kinase family. Homoserine kinase subfamily.

The protein resides in the cytoplasm. The catalysed reaction is L-homoserine + ATP = O-phospho-L-homoserine + ADP + H(+). It functions in the pathway amino-acid biosynthesis; L-threonine biosynthesis; L-threonine from L-aspartate: step 4/5. Functionally, catalyzes the ATP-dependent phosphorylation of L-homoserine to L-homoserine phosphate. In Streptococcus mutans serotype c (strain ATCC 700610 / UA159), this protein is Homoserine kinase.